A 576-amino-acid polypeptide reads, in one-letter code: Proteinaceous RNase P 3 (576 aa).

Residues 65-75 (NRRSRHDDESP) are compositionally biased toward basic and acidic residues. Residues 65–88 (NRRSRHDDESPKNPNKKKKGNRNP) form a disordered region. 4 PPR repeats span residues 88-123 (PEKS…DIRL), 129-166 (QSLL…GISP), 167-201 (NESS…GGVS), and 204-238 (RLRT…GIVL). The 236-residue stretch at 335 to 570 (SSAGKCLSCD…KEESLRSWMC (236 aa)) folds into the PRORP domain. The Zn(2+) site is built by cysteine 340 and cysteine 343. 4 residues coordinate Mn(2+): aspartate 402, aspartate 480, aspartate 481, and aspartate 499. The Zn(2+) site is built by histidine 553 and cysteine 570.

The protein belongs to the PPR family. P subfamily. Requires Mg(2+) as cofactor. The cofactor is Mn(2+).

It localises to the nucleus. It catalyses the reaction Endonucleolytic cleavage of RNA, removing 5'-extranucleotides from tRNA precursor.. Functionally, endonuclease RNase P responsible for the 5' maturation of tRNA precursors. Also involved in the maturation of mRNA and small nucleolar RNA (snoRNA). This is Proteinaceous RNase P 3 (PRORP3) from Arabidopsis thaliana (Mouse-ear cress).